The primary structure comprises 108 residues: Protein SMALL AUXIN UP-REGULATED RNA 8 (108 aa).

This sequence belongs to the ARG7 family. As to expression, expressed in seedlings, leaves and flowers.

The protein localises to the cell membrane. Functionally, provide a mechanistic link between auxin and plasma membrane H(+)-ATPases (PM H(+)-ATPases, e.g. AHA1 and AHA2), and triggers PM H(+)-ATPases activity by promoting phosphorylation of their C-terminal autoinhibitory domain as a result of PP2C-D subfamily of type 2C phosphatases inhibition, thus leading to the acidification of the apoplast and the facilitation of solutes and water uptake to drive cell expansion. Triggers plant growth probably by promoting cell elongation. Regulates branch angles and bending. The polypeptide is Protein SMALL AUXIN UP-REGULATED RNA 8 (Arabidopsis thaliana (Mouse-ear cress)).